The following is a 370-amino-acid chain: Cyclic dehypoxanthine futalosine synthase (370 aa).

Residues 50 to 295 (TTFVIGRNVN…QSSWVTMGPE (246 aa)) enclose the Radical SAM core domain. 3 residues coordinate [4Fe-4S] cluster: cysteine 64, cysteine 68, and cysteine 71.

This sequence belongs to the radical SAM superfamily. MqnC family. [4Fe-4S] cluster is required as a cofactor.

The enzyme catalyses dehypoxanthine futalosine + S-adenosyl-L-methionine = cyclic dehypoxanthinylfutalosinate + 5'-deoxyadenosine + L-methionine + H(+). The protein operates within quinol/quinone metabolism; menaquinone biosynthesis. Functionally, radical SAM enzyme that catalyzes the cyclization of dehypoxanthine futalosine (DHFL) into cyclic dehypoxanthine futalosine (CDHFL), a step in the biosynthesis of menaquinone (MK, vitamin K2). This Halalkalibacterium halodurans (strain ATCC BAA-125 / DSM 18197 / FERM 7344 / JCM 9153 / C-125) (Bacillus halodurans) protein is Cyclic dehypoxanthine futalosine synthase.